Consider the following 323-residue polypeptide: Delta(7)-sterol 5(6)-desaturase ERG3B (323 aa).

3 helical membrane passes run 67–87 (ASILMIAGFGAAFIYVISAAL), 112–132 (IQSSFFAIPIIDLLTLPFFLG), and 150–170 (SWLAISTILYMVFNDLGIYWI). A Fatty acid hydroxylase domain is found at 157 to 285 (ILYMVFNDLG…YFTWADNYWG (129 aa)). Positions 171-175 (HRLEH) match the Histidine box-1 motif. The Histidine box-2 motif lies at 184–188 (HKPHH). A Histidine box-3 motif is present at residues 262 to 266 (HTLHH).

It belongs to the sterol desaturase family.

It localises to the endoplasmic reticulum membrane. The enzyme catalyses episterol + 2 Fe(II)-[cytochrome b5] + O2 + 2 H(+) = 5-dehydroepisterol + 2 Fe(III)-[cytochrome b5] + 2 H2O. It participates in steroid metabolism; ergosterol biosynthesis. C-5 sterol desaturase; part of the third module of ergosterol biosynthesis pathway that includes the late steps of the pathway. ERG3A and ERG3BB catalyze the introduction of a C-5 double bond in the B ring to produce 5-dehydroepisterol. The third module or late pathway involves the ergosterol synthesis itself through consecutive reactions that mainly occur in the endoplasmic reticulum (ER) membrane. Firstly, the squalene synthase ERG9 catalyzes the condensation of 2 farnesyl pyrophosphate moieties to form squalene, which is the precursor of all steroids. Squalene synthase is crucial for balancing the incorporation of farnesyl diphosphate (FPP) into sterol and nonsterol isoprene synthesis. Secondly, squalene is converted into lanosterol by the consecutive action of the squalene epoxidase ERG1 and the lanosterol synthase ERG7. Then, the delta(24)-sterol C-methyltransferase ERG6 methylates lanosterol at C-24 to produce eburicol. Eburicol is the substrate of the sterol 14-alpha demethylase encoded by CYP51A, CYP51B and CYP51C, to yield 4,4,24-trimethyl ergosta-8,14,24(28)-trienol. CYP51B encodes the enzyme primarily responsible for sterol 14-alpha-demethylation, and plays an essential role in ascospore formation. CYP51A encodes an additional sterol 14-alpha-demethylase, induced on ergosterol depletion and responsible for the intrinsic variation in azole sensitivity. The third CYP51 isoform, CYP51C, does not encode a sterol 14-alpha-demethylase, but is required for full virulence on host wheat ears. The C-14 reductase ERG24 then reduces the C14=C15 double bond which leads to 4,4-dimethylfecosterol. A sequence of further demethylations at C-4, involving the C-4 demethylation complex containing the C-4 methylsterol oxidases ERG25, the sterol-4-alpha-carboxylate 3-dehydrogenase ERG26 and the 3-keto-steroid reductase ERG27, leads to the production of fecosterol via 4-methylfecosterol. ERG28 has a role as a scaffold to help anchor ERG25, ERG26 and ERG27 to the endoplasmic reticulum. The C-8 sterol isomerase ERG2 then catalyzes the reaction which results in unsaturation at C-7 in the B ring of sterols and thus converts fecosterol to episterol. The sterol-C5-desaturases ERG3A and ERG3BB then catalyze the introduction of a C-5 double bond in the B ring to produce 5-dehydroepisterol. The C-22 sterol desaturases ERG5A and ERG5B further convert 5-dehydroepisterol into ergosta-5,7,22,24(28)-tetraen-3beta-ol by forming the C-22(23) double bond in the sterol side chain. Finally, ergosta-5,7,22,24(28)-tetraen-3beta-ol is substrate of the C-24(28) sterol reductase ERG4 to produce ergosterol. The polypeptide is Delta(7)-sterol 5(6)-desaturase ERG3B (Gibberella zeae (strain ATCC MYA-4620 / CBS 123657 / FGSC 9075 / NRRL 31084 / PH-1) (Wheat head blight fungus)).